A 1026-amino-acid chain; its full sequence is MADLFDEFIEPGVKNEIMDVEEAPENPMEKLDSAKKRQAREDMTNLLANMHNDVGVGNFDEATSKRARVEEEEEVEEARMENIIVHTIRTDNENCTHEVAIPPNAEFAELRENSGTEPAKYYPFQLDAFQKQAILCIDNNQSVLVSAHTSAGKTVVATYAIAKCLREKQRVIYTSPIKALSNQKYRELEEEFKDVGLMTGDVTLNPDASCLVMTTEILRSMLYRGSEIMKEVGWVVYDEIHYMRDKERGVVWEETIILMSKNIKQAFLSATIPNARQFAQWVASIKQQPVNVVYTDYRPTPLQHWIYPVGGEGMYEVVNVKGEFREDKFRDAMSGLATAGDSAGSFNKRRTGGGTQGDSNVLKIIRSVASNDGLNCIVFSFSRKECESYAISLKDMDFNKDHEKGMVKSVYESAIAQLSPEDQKLPQILNILPLLRRGIGVHHSGLMPILKETIEILFGEGLVKVLFATETFSMGLNMPARTVVFTSARKFDGSDNRYITSGEYIQMAGRAGRRGKDDRGTVILMVDSAMSADDAKQIIKGATDPLNSQFRLTYNMVLNLMRVEGMAVSWIINNSFHQFQSYAKIPEIDKKCVQVERKIASFNFPWENEMRTLVDLQDQLEATRQRIIQIQREPKYIVGFLHAGRLFKVKSGDRDFKWGILNQFKKEQNPDDRNDQIYLCDMMIAINTEGRFDPTNPATLVPGFDLPKRRWIRVPMTIDRITAISAVRLKVPADIDKPDGQMRLDGMMAAATKRFGNQIPLLDPIQDMEIKTVEMKELIAREKSLEGRLETHSMTKRDNMKDLKKQFEQKQDAVKELNALKAERKSVQSTLHLEELNNRKRVLRRLGYLGNDDALVLKGSVACELSASDELILTEMLLKGIFNTLDVAQTAALLSCFVFQDKCAAPKLATELQTCLSELHEQARNVAKVSNECKMEVMEDKYVSSFNPGLMDVVYQWVNGATFSEIVKTTDVFEGSIIRTLRRLEEVLREMINAAKALANKELEQKFEDARKNLKRDIVFAASLYL.

The Helicase ATP-binding domain occupies 134-290 (ILCIDNNQSV…WVASIKQQPV (157 aa)). 147 to 154 (AHTSAGKT) contacts ATP. The DEIH box motif lies at 238–241 (DEIH). Residues 360–564 (NVLKIIRSVA…NMVLNLMRVE (205 aa)) form the Helicase C-terminal domain.

The protein belongs to the helicase family. SKI2 subfamily.

The protein resides in the nucleus. The sequence is that of mRNA transport homolog 4 (mtr-4) from Caenorhabditis elegans.